The following is a 143-amino-acid chain: Transcription antitermination protein NusB (143 aa).

It belongs to the NusB family.

Its function is as follows. Involved in transcription antitermination. Required for transcription of ribosomal RNA (rRNA) genes. Binds specifically to the boxA antiterminator sequence of the ribosomal RNA (rrn) operons. This chain is Transcription antitermination protein NusB, found in Clostridium botulinum (strain ATCC 19397 / Type A).